Consider the following 95-residue polypeptide: Aspartyl/glutamyl-tRNA(Asn/Gln) amidotransferase subunit C (95 aa).

Belongs to the GatC family. In terms of assembly, heterotrimer of A, B and C subunits.

The catalysed reaction is L-glutamyl-tRNA(Gln) + L-glutamine + ATP + H2O = L-glutaminyl-tRNA(Gln) + L-glutamate + ADP + phosphate + H(+). It carries out the reaction L-aspartyl-tRNA(Asn) + L-glutamine + ATP + H2O = L-asparaginyl-tRNA(Asn) + L-glutamate + ADP + phosphate + 2 H(+). In terms of biological role, allows the formation of correctly charged Asn-tRNA(Asn) or Gln-tRNA(Gln) through the transamidation of misacylated Asp-tRNA(Asn) or Glu-tRNA(Gln) in organisms which lack either or both of asparaginyl-tRNA or glutaminyl-tRNA synthetases. The reaction takes place in the presence of glutamine and ATP through an activated phospho-Asp-tRNA(Asn) or phospho-Glu-tRNA(Gln). In Halothermothrix orenii (strain H 168 / OCM 544 / DSM 9562), this protein is Aspartyl/glutamyl-tRNA(Asn/Gln) amidotransferase subunit C.